A 914-amino-acid chain; its full sequence is Serine/threonine kinase SAD-1 (914 aa).

The Protein kinase domain occupies 47-298 (YKLEKTLGKG…LADVFKHPWV (252 aa)). ATP-binding positions include 53–61 (LGKGQTGLV) and lysine 76. Aspartate 169 functions as the Proton acceptor in the catalytic mechanism. 3 disordered regions span residues 375–551 (AQED…SPPS), 563–590 (TMNS…SGPW), and 757–914 (NSTQ…ADKV). Residues 393–402 (PPKKRTDSSR) show a composition bias toward basic and acidic residues. The span at 444-462 (RSSTRDLFGSSSSGSYSAR) shows a compositional bias: low complexity. A compositionally biased stretch (polar residues) spans 473–482 (ASRSTNSYHY). Positions 495-526 (AARHVRDAQERRESRDSGRGSSRKESKDRSDK) are enriched in basic and acidic residues. 2 stretches are compositionally biased toward low complexity: residues 527–551 (SASS…SPPS) and 563–573 (TMNSTNSSTNS). Polar residues predominate over residues 574–590 (LIAGNSQTSIGSTSGPW). The segment covering 780-796 (DSSVGSACSDSESNASS) has biased composition (low complexity). Positions 823–837 (SMRSVGSGTANSYKS) are enriched in polar residues. Residues 850–876 (ASSSSASNRYGPSSSSSGSYSNNADYS) show a composition bias toward low complexity. Positions 882–903 (SQRSNGSSAPKNQYSPGSQRSF) are enriched in polar residues.

It belongs to the protein kinase superfamily. CAMK Ser/Thr protein kinase family. SNF1 subfamily. As to quaternary structure, interacts with strd-1 and nab-1. It depends on Mg(2+) as a cofactor. Expressed in neurons. Colocalizes with strd-1 along the dorsal nerve cord.

Its subcellular location is the synapse. The enzyme catalyses L-seryl-[protein] + ATP = O-phospho-L-seryl-[protein] + ADP + H(+). It carries out the reaction L-threonyl-[protein] + ATP = O-phospho-L-threonyl-[protein] + ADP + H(+). Its function is as follows. Regulates both neuronal polarity and synaptic organization when bound to strd-1. Kinase activity is required for the establishment, but not the maintenance, of both processes. Binding to nab-1 is essential for role in restricting axonal fate during neuronal polarization but is not required for regulating synapse morphology. This is Serine/threonine kinase SAD-1 from Caenorhabditis elegans.